A 389-amino-acid polypeptide reads, in one-letter code: Probable transcription factor FL (389 aa).

2 disordered regions span residues 1–41 and 140–226; these read MDPN…ANVP and EHDM…HPFV. Residues 19 to 39 are compositionally biased toward pro residues; the sequence is PPAPAPVPPPPPPPPPPPPAN. Residues 159 to 180 show a composition bias toward basic residues; the sequence is VTGKKQAKKGSAARKGKKARRK. The short motif at 161 to 168 is the Nuclear localization signal element; sequence GKKQAKKG. Residues 190 to 201 show a composition bias toward acidic residues; sequence QEDEMDCCDEDG. DNA-binding regions lie at residues 221-225, 290-297, and 361-364; these read REHPF, NKPKMRHY, and YVPT.

This sequence belongs to the FLO/LFY family. As to quaternary structure, interacts with APO1. In terms of tissue distribution, in very young panicle but not in mature florets, mature leaves, roots or apical meristems.

The protein localises to the nucleus. Probable transcription factor. Together with APO1, involved in the temporal regulation of meristem size and identity during both vegetative and reproductive developments through interaction with APO1. Promotes flowering. This chain is Probable transcription factor FL, found in Oryza sativa subsp. japonica (Rice).